Here is a 61-residue protein sequence, read N- to C-terminus: Transmembrane protein 300R (61 aa).

2 helical membrane passes run 5–25 (FLDL…FYLT) and 35–55 (SLSY…IYLQ).

It is found in the membrane. The protein is Transmembrane protein 300R of Invertebrate iridescent virus 6 (IIV-6).